The chain runs to 885 residues: Chromatin assembly factor 1 subunit A-B (885 aa).

Disordered stretches follow at residues 1 to 24, 115 to 157, 176 to 361, and 536 to 605; these read MPGKEAAGDVMKSSTKSNTKKMVQ, EDSN…NEEC, LDKP…EEEK, and VDSD…QKLK. Over residues 12–21 the composition is skewed to low complexity; sequence KSSTKSNTKK. 3 stretches are compositionally biased toward polar residues: residues 116–128, 134–157, and 182–193; these read DSNISTSNDSPLN, QLANGTVSPERSTTNAPLSTNEEC, and SAASCTSVSNFS. 2 stretches are compositionally biased toward low complexity: residues 211–227 and 237–254; these read VSVSSSSSPVSLSSPDV and SSPSTSTTPTGKATSNKT. Residues 251-376 adopt a coiled-coil conformation; it reads SNKTSAEKKK…KAEITRFLQK (126 aa). The segment covering 255-361 has biased composition (basic and acidic residues); it reads SAEKKKTKDK…EEKRLKEEEK (107 aa). Acidic residues-rich tracts occupy residues 536-548 and 557-573; these read VDSDEEWEEEEPG and ENEDDDPKEEEDEDDDG. Positions 629–665 are necessary for homodimerization, competence for chromatin assembly; that stretch reads CVWCDSKASEIRLLQKFSACILESPAVEEELTQDISS.

Belongs to the CHAF1A family. As to quaternary structure, homodimer.

The protein localises to the nucleus. Functionally, involved in chromatin assembly in DNA replication and DNA repair. This Xenopus laevis (African clawed frog) protein is Chromatin assembly factor 1 subunit A-B (chaf1a-b).